A 1758-amino-acid polypeptide reads, in one-letter code: Collagen alpha-2(IV) chain (1758 aa).

The signal sequence occupies residues 1 to 26 (MKQRAALGPVLRLAILALLAVSYVQS). Residues 27–42 (QATCRDCSNRGCFCVG) form a 7S domain region. Positions 42 to 1527 (GEKGSMGAPG…PGAPGAAGPA (1486 aa)) are triple-helical region. A compositionally biased stretch (low complexity) spans 47–62 (MGAPGPQGPPGTQGIR). Disordered regions lie at residues 47–943 (MGAP…GAPG), 955–1304 (GVPG…GLPG), 1316–1339 (GFPG…DGLP), and 1367–1525 (GFPG…GAAG). The segment covering 102-111 (GNDGGNGRPG) has biased composition (gly residues). A compositionally biased stretch (pro residues) spans 134-149 (PGRPGPPGMPGFPGPP). Basic and acidic residues predominate over residues 189–198 (YPGEKGDRGD). Low complexity predominate over residues 224-234 (PKGDPGDLGSV). Ser248 carries an O-linked (Xyl...) (glycosaminoglycan) serine glycan. Residues 258 to 267 (PGEKGDKGEP) are compositionally biased toward basic and acidic residues. Residues 268 to 283 (GEGGQRGYPGNGGLSG) are compositionally biased toward gly residues. Positions 367–382 (PGPPGLPGRPGNPGPP) are enriched in pro residues. Residues 398-407 (GNTGGPGLPG) show a composition bias toward gly residues. 2 stretches are compositionally biased toward low complexity: residues 408–417 (YPGNEGLPGP) and 429–439 (APGVSGPSGIP). Residues 464-479 (KDGKPGLDGAPGRKGE) are compositionally biased toward basic and acidic residues. 2 stretches are compositionally biased toward low complexity: residues 495 to 509 (GLPG…PGPN) and 568 to 584 (PVGD…AGRP). The span at 638 to 648 (PSGPVGPPGAP) shows a compositional bias: pro residues. 3 stretches are compositionally biased toward gly residues: residues 693–702 (GAKGDGGLPG), 737–746 (GTKGEGGYPG), and 782–791 (GDKGFGGVPG). Low complexity predominate over residues 839-858 (LPGLPGTPGLEGQRGFPGAP). A compositionally biased stretch (gly residues) spans 859–868 (GLKGGDGLPG). The segment covering 929–938 (APGQSGAPGL) has biased composition (low complexity). A compositionally biased stretch (gly residues) spans 958–967 (GFKGDGGLPG). Residues 968–980 (LPGLNGPKGEPGV) are compositionally biased toward low complexity. The segment covering 988-997 (GMKGNGGLPG) has biased composition (gly residues). Residues 1040–1056 (LPGQPGLRGPQGPSGLP) are compositionally biased toward low complexity. The span at 1194-1203 (GLPGLGGEKG) shows a compositional bias: gly residues. The segment covering 1237-1250 (FPGQPGQEGLPGLS) has biased composition (low complexity). The segment covering 1251 to 1260 (GEKGMGGLPG) has biased composition (gly residues). A compositionally biased stretch (gly residues) spans 1373–1382 (GLKGEGGLPG). 2 stretches are compositionally biased toward low complexity: residues 1413–1425 (LPGR…ADGP) and 1433–1454 (GPQN…APGL). Gly residues-rich tracts occupy residues 1492 to 1501 (GEKGMGGLPG) and 1507 to 1516 (GQPGGPGAPG). The 224-residue stretch at 1531–1754 (GFVLVKHSQT…SRCQVCVKST (224 aa)) folds into the Collagen IV NC1 domain. Intrachain disulfides connect Cys1546/Cys1635, Cys1579/Cys1632, Cys1591/Cys1597, Cys1654/Cys1750, Cys1688/Cys1747, and Cys1700/Cys1707.

This sequence belongs to the type IV collagen family. In terms of assembly, trimers of two alpha 1(IV) and one alpha 2(IV) chain. Type IV collagen forms a mesh-like network linked through intermolecular interactions between 7S domains and between NC1 domains. Prolines at the third position of the tripeptide repeating unit (G-X-Y) are hydroxylated in some or all of the chains. Post-translationally, type IV collagens contain numerous cysteine residues which are involved in inter- and intramolecular disulfide bonding. 12 of these, located in the NC1 domain, are conserved in all known type IV collagens. In terms of processing, the trimeric structure of the NC1 domains is stabilized by covalent bonds between Lys and Met residues. In terms of tissue distribution, localizes to the basement membrane between distal tip cells and the germline. Localizes to the intestinal basement membrane.

It is found in the secreted. Its subcellular location is the extracellular space. The protein resides in the extracellular matrix. It localises to the basement membrane. Collagen type IV is specific for basement membranes. Together with fbl-1 and downstream of metalloprotease mig-17, recruits nidogen nid-1 to the gonad basement membrane thereby probably inducing basement membrane remodeling required for the directional migration of distal tip cells. Required to restrict presynaptic growth at the neuromuscular junctions in late larval stage and in adult motor neurons. Vital for embryonic development. This is Collagen alpha-2(IV) chain from Caenorhabditis elegans.